A 207-amino-acid polypeptide reads, in one-letter code: MKLKELESCLQQVDGFEEPKILLEQYPTSPHIAGCMLYTIHNTFDDIQNKLVADLGCGCGVLSIGAAVLDAGLCVGFDIDEDALDIFRGNVEEFELPNIDVVQCDVCSIGSSYAKKFDTVIMNPPFGTKHNQGIDMQFLQTAISMATSAVYSLHKTSTRDHIQKKANDWKVKMEVIAELRYDLPASYKFHKKKSVDIQVDFIRFTPT.

Residues Q25, T28, G56, C59, V61, D78, and 105-106 (DV) each bind S-adenosyl-L-methionine.

It belongs to the methyltransferase superfamily. PrmA family.

It is found in the nucleus. Its subcellular location is the presynapse. It localises to the postsynapse. It carries out the reaction adenosine(1832) in 18S rRNA + S-adenosyl-L-methionine = N(6)-methyladenosine(1832) in 18S rRNA + S-adenosyl-L-homocysteine + H(+). RRNA N6-adenosine-methyltransferase activity is inhibited by zinc. Catalytic subunit of a heterodimer with TRMT112, which specifically methylates the 6th position of adenine in position 1832 of 18S rRNA. N6-methylation of adenine(1832) in 18S rRNA resides in the decoding center of 18S rRNA and is required for translation and embryonic stem cells (ESCs) pluripotency and differentiation. The polypeptide is rRNA N(6)-adenosine-methyltransferase METTL5 (Danio rerio (Zebrafish)).